The following is a 750-amino-acid chain: GTP pyrophosphokinase rsh (750 aa).

The HD domain occupies 45-144 (YFSHPLEVAA…VKLADRLHNM (100 aa)). One can recognise a TGS domain in the interval 390-451 (DQVFCFTPKG…KNGDEVDIIR (62 aa)). Positions 587–613 (AAKVDPAATTPKPGKRALPIRGTNPDL) are disordered. Positions 676-750 (RISVSAINSP…SVSSAKRVNG (75 aa)) constitute an ACT domain.

The protein belongs to the RelA/SpoT family.

It catalyses the reaction GTP + ATP = guanosine 3'-diphosphate 5'-triphosphate + AMP. In terms of biological role, functions as a (p)ppGpp synthase. In eubacteria ppGpp (guanosine 3'-diphosphate 5'-diphosphate) is a mediator of the stringent response that coordinates a variety of cellular activities in response to changes in nutritional abundance. It is necessary for persistence in mice, essential for intracellular growth of Brucella and required for expression of the type IV secretion system VirB and therefore plays a role in adaptation of Brucella to its intracellular host environment. In Brucella suis biovar 1 (strain 1330), this protein is GTP pyrophosphokinase rsh (rsh).